The primary structure comprises 342 residues: Dihydroorotase (342 aa).

The Zn(2+) site is built by histidine 13 and histidine 15. Substrate is bound by residues 15–17 (HLR) and asparagine 41. 3 residues coordinate Zn(2+): lysine 98, histidine 135, and histidine 173. Lysine 98 carries the post-translational modification N6-carboxylysine. A substrate-binding site is contributed by histidine 135. Leucine 218 is a binding site for substrate. Residue aspartate 246 participates in Zn(2+) binding. The active site involves aspartate 246. Positions 250 and 262 each coordinate substrate.

It belongs to the metallo-dependent hydrolases superfamily. DHOase family. Class II DHOase subfamily. Homodimer. Zn(2+) serves as cofactor.

It catalyses the reaction (S)-dihydroorotate + H2O = N-carbamoyl-L-aspartate + H(+). Its pathway is pyrimidine metabolism; UMP biosynthesis via de novo pathway; (S)-dihydroorotate from bicarbonate: step 3/3. Its function is as follows. Catalyzes the reversible cyclization of carbamoyl aspartate to dihydroorotate. This chain is Dihydroorotase, found in Vibrio cholerae serotype O1 (strain ATCC 39315 / El Tor Inaba N16961).